We begin with the raw amino-acid sequence, 612 residues long: MPSYRSRISTHGRNMAGARGLWRATGMKDADFGKPIIAIANSFTQFVPGHVHLKDLGQLVAQQIEIAGGVAKEFNTIAVDDGIAMGHDGMLYSLPSREIIADSVEYMVNAHCADALVCISNCDKITPGMLMAALRLNIPTIFVSGGPMEAGKIKWKDQDLRVDLVDAMIAAASEHNSEEEVAEMERAACPTCGSCSGMFTANSMNCLTEALGLSLPGNGSVLATHRDRRMLFEEAGRQIVALVKRYYEKDDETVLPRSIASRKAFENAMTVDIAMGGSTNTVLHLLAAAQEGEVDFTMTDIDHLSRRVPVLCKVAPAVANVHMEDVHRAGGIMGLLGELDAAGLIDTSTYTVHAKTMKEALDHWDIKQTNEPTVCAFYRAAPGGIPTQRAFSQSCRYETLDLDRAKGVIRDKEHAYSQDGGLAVLYGNLAKDGCIVKTAGVDQSILTFKGPARIFESQDSAVSAILNDKIKTGEIVLIRYEGPRGGPGMQEMLYPTSYLKSKGLGKVCALVTDGRFSGGSSGLSIGHVSPEAAEGGEIALVEEGDIIEIDIPNRSIHMLVDDVEMKQRRAKMAAKGNGAWQPIEKRQRKVSKALKAYAAMTTSAAKGAVRNI.

Position 81 (aspartate 81) interacts with Mg(2+). A [2Fe-2S] cluster-binding site is contributed by cysteine 122. Mg(2+) is bound by residues aspartate 123 and lysine 124. Lysine 124 bears the N6-carboxylysine mark. Cysteine 195 contributes to the [2Fe-2S] cluster binding site. Glutamate 491 serves as a coordination point for Mg(2+). Serine 517 serves as the catalytic Proton acceptor.

It belongs to the IlvD/Edd family. As to quaternary structure, homodimer. [2Fe-2S] cluster serves as cofactor. Requires Mg(2+) as cofactor.

It carries out the reaction (2R)-2,3-dihydroxy-3-methylbutanoate = 3-methyl-2-oxobutanoate + H2O. The catalysed reaction is (2R,3R)-2,3-dihydroxy-3-methylpentanoate = (S)-3-methyl-2-oxopentanoate + H2O. It participates in amino-acid biosynthesis; L-isoleucine biosynthesis; L-isoleucine from 2-oxobutanoate: step 3/4. Its pathway is amino-acid biosynthesis; L-valine biosynthesis; L-valine from pyruvate: step 3/4. Functions in the biosynthesis of branched-chain amino acids. Catalyzes the dehydration of (2R,3R)-2,3-dihydroxy-3-methylpentanoate (2,3-dihydroxy-3-methylvalerate) into 2-oxo-3-methylpentanoate (2-oxo-3-methylvalerate) and of (2R)-2,3-dihydroxy-3-methylbutanoate (2,3-dihydroxyisovalerate) into 2-oxo-3-methylbutanoate (2-oxoisovalerate), the penultimate precursor to L-isoleucine and L-valine, respectively. The chain is Dihydroxy-acid dehydratase from Bartonella tribocorum (strain CIP 105476 / IBS 506).